Consider the following 33-residue polypeptide: Helofensin-1 (33 aa).

It belongs to the beta-defensin family. Helofensin subfamily. Expressed by the venom gland.

The protein resides in the secreted. Functionally, lethal toxin which possesses an inhibitory effect on direct electrical stimulation of the isolated hemi-diaphragm. Neither hemorrhagic nor hemolytic activities are detected. Phospholipase A2 activity, proteolytic activity and arginine esterolytic activity are absent. The sequence is that of Helofensin-1 from Heloderma horridum horridum (Mexican beaded lizard).